The chain runs to 325 residues: MLLKAELHCHIEGAASPALVKAQARKYGADISSFIRGGAYYWQDFTTFLLAYDQAASLFRTQEDYALLAETYLKELAAGGAIYSEFFTSPDHAERAGLSPQAYTDGLAEGMVQAKAATGIESRMIVTGVRHFGPEAVEKAARFAASCEHPLVTGFGMAGDERAGHPRDFAYAFDIAREAGLGISIHAGEFGGAESVEAALDHIRPSRIGHGVRAIENPDLVRRIADEGVVLEVCPVSNVVLKVFPEFARHPFPQLVAAGCRVTLNSDDPPHFHTSLAREYAVAAEYFGLDETTLNAITSTAIEAAFVDEKTRAALFARLKPVVES.

Zn(2+) contacts are provided by His8, His10, and His186. The Proton donor role is filled by Glu189. Asp267 provides a ligand contact to Zn(2+). Asp268 lines the substrate pocket.

It belongs to the metallo-dependent hydrolases superfamily. Adenosine and AMP deaminases family. Adenine deaminase type 2 subfamily. Requires Zn(2+) as cofactor.

It carries out the reaction adenine + H2O + H(+) = hypoxanthine + NH4(+). Functionally, catalyzes the hydrolytic deamination of adenine to hypoxanthine. Plays an important role in the purine salvage pathway and in nitrogen catabolism. In Chelativorans sp. (strain BNC1), this protein is Adenine deaminase.